Here is a 465-residue protein sequence, read N- to C-terminus: 6-phospho-beta-glucosidase (465 aa).

Glu173 functions as the Proton donor in the catalytic mechanism. The active-site Nucleophile is the Glu362.

Belongs to the glycosyl hydrolase 1 family.

The catalysed reaction is 6-phospho-beta-D-glucosyl-(1-&gt;4)-D-glucose + H2O = D-glucose 6-phosphate + D-glucose. Its pathway is carbohydrate metabolism; beta-glucoside metabolism. The protein is 6-phospho-beta-glucosidase (arbB) of Dickeya chrysanthemi (Pectobacterium chrysanthemi).